A 261-amino-acid chain; its full sequence is Uridine-cytidine kinase 2 (261 aa).

A compositionally biased stretch (polar residues) spans 1–16 (MAGDSEQTLQNHQQPN). The tract at residues 1 to 24 (MAGDSEQTLQNHQQPNGGEPFLIG) is disordered. N-acetylalanine is present on Ala2. 27–35 (GGTASGKSS) lines the ATP pocket. Substrate-binding residues include Asp84, Tyr112, His117, Arg166, Arg176, and Gln184. Residue Asp213 coordinates ATP. Positions 240–261 (GYLNGYTPSRKRQASESSSRPH) are disordered. Ser254 carries the post-translational modification Phosphoserine.

Belongs to the uridine kinase family. In terms of assembly, homotetramer.

The enzyme catalyses uridine + ATP = UMP + ADP + H(+). It catalyses the reaction cytidine + ATP = CMP + ADP + H(+). The protein operates within pyrimidine metabolism; CTP biosynthesis via salvage pathway; CTP from cytidine: step 1/3. Its pathway is pyrimidine metabolism; UMP biosynthesis via salvage pathway; UMP from uridine: step 1/1. In terms of biological role, phosphorylates uridine and cytidine to uridine monophosphate and cytidine monophosphate. Does not phosphorylate deoxyribonucleosides or purine ribonucleosides. Can use ATP or GTP as a phosphate donor. This Mus musculus (Mouse) protein is Uridine-cytidine kinase 2 (Uck2).